The primary structure comprises 260 residues: Thiazole synthase (260 aa).

K96 acts as the Schiff-base intermediate with DXP in catalysis. Residues G157, 184-185 (AG), and 206-207 (NT) each bind 1-deoxy-D-xylulose 5-phosphate.

Belongs to the ThiG family. In terms of assembly, homotetramer. Forms heterodimers with either ThiH or ThiS.

It is found in the cytoplasm. The catalysed reaction is [ThiS sulfur-carrier protein]-C-terminal-Gly-aminoethanethioate + 2-iminoacetate + 1-deoxy-D-xylulose 5-phosphate = [ThiS sulfur-carrier protein]-C-terminal Gly-Gly + 2-[(2R,5Z)-2-carboxy-4-methylthiazol-5(2H)-ylidene]ethyl phosphate + 2 H2O + H(+). Its pathway is cofactor biosynthesis; thiamine diphosphate biosynthesis. Its function is as follows. Catalyzes the rearrangement of 1-deoxy-D-xylulose 5-phosphate (DXP) to produce the thiazole phosphate moiety of thiamine. Sulfur is provided by the thiocarboxylate moiety of the carrier protein ThiS. In vitro, sulfur can be provided by H(2)S. The sequence is that of Thiazole synthase from Rhodopseudomonas palustris (strain BisA53).